The following is a 363-amino-acid chain: Flagellar P-ring protein (363 aa).

The signal sequence occupies residues 1–20; it reads MKLKLILAVAMLAFSLPSQA.

This sequence belongs to the FlgI family. The basal body constitutes a major portion of the flagellar organelle and consists of four rings (L,P,S, and M) mounted on a central rod.

The protein localises to the periplasm. Its subcellular location is the bacterial flagellum basal body. In terms of biological role, assembles around the rod to form the L-ring and probably protects the motor/basal body from shearing forces during rotation. The chain is Flagellar P-ring protein from Shewanella sp. (strain MR-7).